The chain runs to 421 residues: UPF0229 protein lpl2726 (421 aa).

Positions 83 to 110 (IAGDRIKRPGGGGSGGAGGNASDSGEGE) are disordered. Positions 91–101 (PGGGGSGGAGG) are enriched in gly residues.

The protein belongs to the UPF0229 family.

This Legionella pneumophila (strain Lens) protein is UPF0229 protein lpl2726.